The sequence spans 201 residues: Small ribosomal subunit protein uS4 (201 aa).

Residues 93 to 155 (CRLDNIVYRM…SKSLSMFEVN (63 aa)) form the S4 RNA-binding domain.

The protein belongs to the universal ribosomal protein uS4 family. In terms of assembly, part of the 30S ribosomal subunit. Contacts protein S5. The interaction surface between S4 and S5 is involved in control of translational fidelity.

One of the primary rRNA binding proteins, it binds directly to 16S rRNA where it nucleates assembly of the body of the 30S subunit. Its function is as follows. With S5 and S12 plays an important role in translational accuracy. This Elusimicrobium minutum (strain Pei191) protein is Small ribosomal subunit protein uS4.